A 370-amino-acid polypeptide reads, in one-letter code: Aminomethyltransferase (370 aa).

It belongs to the GcvT family. In terms of assembly, the glycine cleavage system is composed of four proteins: P, T, L and H.

The catalysed reaction is N(6)-[(R)-S(8)-aminomethyldihydrolipoyl]-L-lysyl-[protein] + (6S)-5,6,7,8-tetrahydrofolate = N(6)-[(R)-dihydrolipoyl]-L-lysyl-[protein] + (6R)-5,10-methylene-5,6,7,8-tetrahydrofolate + NH4(+). Its function is as follows. The glycine cleavage system catalyzes the degradation of glycine. The polypeptide is Aminomethyltransferase (Clostridium botulinum (strain Langeland / NCTC 10281 / Type F)).